Consider the following 162-residue polypeptide: 2-amino-4-hydroxy-6-hydroxymethyldihydropteridine pyrophosphokinase (162 aa).

The protein belongs to the HPPK family.

It carries out the reaction 6-hydroxymethyl-7,8-dihydropterin + ATP = (7,8-dihydropterin-6-yl)methyl diphosphate + AMP + H(+). The protein operates within cofactor biosynthesis; tetrahydrofolate biosynthesis; 2-amino-4-hydroxy-6-hydroxymethyl-7,8-dihydropteridine diphosphate from 7,8-dihydroneopterin triphosphate: step 4/4. Catalyzes the transfer of pyrophosphate from adenosine triphosphate (ATP) to 6-hydroxymethyl-7,8-dihydropterin, an enzymatic step in folate biosynthesis pathway. The polypeptide is 2-amino-4-hydroxy-6-hydroxymethyldihydropteridine pyrophosphokinase (folK) (Pseudomonas aeruginosa (strain ATCC 15692 / DSM 22644 / CIP 104116 / JCM 14847 / LMG 12228 / 1C / PRS 101 / PAO1)).